The following is a 249-amino-acid chain: Phosphoribosylaminoimidazole-succinocarboxamide synthase (249 aa).

This sequence belongs to the SAICAR synthetase family.

The enzyme catalyses 5-amino-1-(5-phospho-D-ribosyl)imidazole-4-carboxylate + L-aspartate + ATP = (2S)-2-[5-amino-1-(5-phospho-beta-D-ribosyl)imidazole-4-carboxamido]succinate + ADP + phosphate + 2 H(+). Its pathway is purine metabolism; IMP biosynthesis via de novo pathway; 5-amino-1-(5-phospho-D-ribosyl)imidazole-4-carboxamide from 5-amino-1-(5-phospho-D-ribosyl)imidazole-4-carboxylate: step 1/2. The sequence is that of Phosphoribosylaminoimidazole-succinocarboxamide synthase from Chloroflexus aurantiacus (strain ATCC 29366 / DSM 635 / J-10-fl).